The chain runs to 132 residues: Small ribosomal subunit protein uS8 (132 aa).

It belongs to the universal ribosomal protein uS8 family. In terms of assembly, part of the 30S ribosomal subunit. Contacts proteins S5 and S12.

Its function is as follows. One of the primary rRNA binding proteins, it binds directly to 16S rRNA central domain where it helps coordinate assembly of the platform of the 30S subunit. This chain is Small ribosomal subunit protein uS8, found in Lactobacillus delbrueckii subsp. bulgaricus (strain ATCC BAA-365 / Lb-18).